The following is a 535-amino-acid chain: Palmdelphin (535 aa).

A coiled-coil region spans residues 1–105 (MEEAELLKER…KEELQVSTKE (105 aa)). The segment at 423–450 (VVIDDDDDDDDDEEADKKGEENTKESVS) is disordered. Residues 424 to 436 (VIDDDDDDDDDEE) show a composition bias toward acidic residues. Basic and acidic residues predominate over residues 437 to 446 (ADKKGEENTK).

It belongs to the paralemmin family.

It is found in the cytoplasm. The protein localises to the cell projection. Its subcellular location is the dendrite. It localises to the dendritic spine. The protein is Palmdelphin (palmd) of Xenopus laevis (African clawed frog).